Consider the following 195-residue polypeptide: PAP fimbrial minor pilin protein (195 aa).

Residues 1–22 form the signal peptide; it reads MRLRFSVPLFFFGCVFVHGVFA. C58 and C97 are oxidised to a cystine.

Belongs to the fimbrial protein family.

The protein resides in the secreted. The protein localises to the fimbrium. Functionally, fimbriae (also called pili), polar filaments radiating from the surface of the bacterium to a length of 0.5-1.5 micrometers and numbering 100-300 per cell, enable bacteria to colonize the epithelium of specific host organs. In terms of biological role, papH seems to anchor the pilus to the bacterial cell. In addition the stoichiometric relationship between PapH and PapA determines the pilus length. The chain is PAP fimbrial minor pilin protein (papH) from Escherichia coli.